The chain runs to 350 residues: Trans-enoyl reductase iliB (350 aa).

50–53 is a binding site for NADP(+); sequence VDGK. 145–152 serves as a coordination point for substrate; the sequence is AAIATVGL. Residues 177-180, tyrosine 195, and 242-243 each bind NADP(+); these read SAAS and LD. 262–266 lines the substrate pocket; it reads TPTQF. 331–332 is an NADP(+) binding site; it reads IK.

It belongs to the zinc-containing alcohol dehydrogenase family. Monomer.

The enzyme catalyses N-[(4E,6E,10S,12Z,14E)-6,10-dimethyl-3-oxohexadeca-4,6,12,14-tetraenoyl]-L-tyrosyl-[ACP] = (3E,5S)-3-[(2E,4E,8S,10E,12Z)-1-hydroxy-4,8-dimethyltetradeca-2,4,10,12-tetraen-1-ylidene]-5-[(4-hydroxyphenyl)methyl]pyrrolidine-2,4-dione + holo-[ACP] + H(+). It functions in the pathway mycotoxin biosynthesis. Functionally, trans-enoyl reductase; part of the gene cluster that mediates the biosynthesis of ilicicolin H, a 4-hydroxy-2-pyridonealkaloid that has potent and broad antifungal activities by inhibiting the mitochondrial respiration chain. IliB collaborates with the hybrid PKS-NRPS synthetase iliA to assemble the backbone of ilicicolin H. The PKS portion of iliA and trans-acting enoyl reductase iliB work together to construct an octaketide, and two methyl groups are introduced by the MT domain of iliA during the chain assembly. The nascent chain is then condensed with tyrosine, catalyzed by the iliA C domain, and the resulting PKS-NRPS hybrid is offloaded by the iliA RED domain to form an advanced tetramic acid intermediate. The biosynthesis of ilicicolin H starts with formation of the tetramic acid by the hybrid PKS-NRPS synthetase iliA with the partnering trans-enoyl reductase iliB since iliA lacks a designated enoylreductase (ER) domain. The cytochrome P450 monooxygenase iliC then catalyzes the ring expansion of the tetramate to the acyclic 2-pyridone. The pericyclase iliD further converts the acyclic 2-pyridone into 8-epi-ilicicolin H. 8-epi-ilicicolin H might then spontaneously convert to ilicicolin H since ilicicolin H is produced in the absence of the epimerase iliE, in contrast to what was observed for the Talaromyces variabilis ilicolin H biosynthetic pathway. This Hypocrea jecorina (strain QM6a) (Trichoderma reesei) protein is Trans-enoyl reductase iliB.